The sequence spans 689 residues: Glycine--tRNA ligase beta subunit (689 aa).

It belongs to the class-II aminoacyl-tRNA synthetase family. Tetramer of two alpha and two beta subunits.

The protein resides in the cytoplasm. The catalysed reaction is tRNA(Gly) + glycine + ATP = glycyl-tRNA(Gly) + AMP + diphosphate. This Acinetobacter baumannii (strain ATCC 17978 / DSM 105126 / CIP 53.77 / LMG 1025 / NCDC KC755 / 5377) protein is Glycine--tRNA ligase beta subunit.